We begin with the raw amino-acid sequence, 260 residues long: Phosphoribosylaminoimidazole-succinocarboxamide synthase (260 aa).

It belongs to the SAICAR synthetase family.

The enzyme catalyses 5-amino-1-(5-phospho-D-ribosyl)imidazole-4-carboxylate + L-aspartate + ATP = (2S)-2-[5-amino-1-(5-phospho-beta-D-ribosyl)imidazole-4-carboxamido]succinate + ADP + phosphate + 2 H(+). It functions in the pathway purine metabolism; IMP biosynthesis via de novo pathway; 5-amino-1-(5-phospho-D-ribosyl)imidazole-4-carboxamide from 5-amino-1-(5-phospho-D-ribosyl)imidazole-4-carboxylate: step 1/2. The chain is Phosphoribosylaminoimidazole-succinocarboxamide synthase from Pelagibacter ubique (strain HTCC1062).